The following is a 249-amino-acid chain: Ribonuclease HII (249 aa).

Pro residues predominate over residues 1–19 (MAPRPKAPPQPAEPDPALP). The interval 1–31 (MAPRPKAPPQPAEPDPALPRPRGRPPKAGAV) is disordered. The RNase H type-2 domain occupies 52–240 (APVAGADEVG…VREQQLGLFP (189 aa)). Residues aspartate 58, glutamate 59, and aspartate 149 each coordinate a divalent metal cation.

The protein belongs to the RNase HII family. Mn(2+) serves as cofactor. Requires Mg(2+) as cofactor.

The protein resides in the cytoplasm. It catalyses the reaction Endonucleolytic cleavage to 5'-phosphomonoester.. Endonuclease that specifically degrades the RNA of RNA-DNA hybrids. In Xanthobacter autotrophicus (strain ATCC BAA-1158 / Py2), this protein is Ribonuclease HII.